Consider the following 203-residue polypeptide: A-type ATP synthase subunit E (203 aa).

This sequence belongs to the V-ATPase E subunit family. Has multiple subunits with at least A(3), B(3), C, D, E, F, H, I and proteolipid K(x).

Its subcellular location is the cell membrane. Component of the A-type ATP synthase that produces ATP from ADP in the presence of a proton gradient across the membrane. The sequence is that of A-type ATP synthase subunit E from Thermococcus kodakarensis (strain ATCC BAA-918 / JCM 12380 / KOD1) (Pyrococcus kodakaraensis (strain KOD1)).